A 368-amino-acid chain; its full sequence is Queuine tRNA-ribosyltransferase (368 aa).

Catalysis depends on Asp-89, which acts as the Proton acceptor. Substrate contacts are provided by residues 89-93, Asp-143, and Gly-216; that span reads DSGGF. The tract at residues 247 to 253 is RNA binding; that stretch reads GVGKPED. Asp-266 functions as the Nucleophile in the catalytic mechanism. The segment at 271–275 is RNA binding; important for wobble base 34 recognition; it reads TRNAR. The Zn(2+) site is built by Cys-304, Cys-306, Cys-309, and His-335.

This sequence belongs to the queuine tRNA-ribosyltransferase family. In terms of assembly, homodimer. Within each dimer, one monomer is responsible for RNA recognition and catalysis, while the other monomer binds to the replacement base PreQ1. It depends on Zn(2+) as a cofactor.

It carries out the reaction 7-aminomethyl-7-carbaguanine + guanosine(34) in tRNA = 7-aminomethyl-7-carbaguanosine(34) in tRNA + guanine. Its pathway is tRNA modification; tRNA-queuosine biosynthesis. Catalyzes the base-exchange of a guanine (G) residue with the queuine precursor 7-aminomethyl-7-deazaguanine (PreQ1) at position 34 (anticodon wobble position) in tRNAs with GU(N) anticodons (tRNA-Asp, -Asn, -His and -Tyr). Catalysis occurs through a double-displacement mechanism. The nucleophile active site attacks the C1' of nucleotide 34 to detach the guanine base from the RNA, forming a covalent enzyme-RNA intermediate. The proton acceptor active site deprotonates the incoming PreQ1, allowing a nucleophilic attack on the C1' of the ribose to form the product. After dissociation, two additional enzymatic reactions on the tRNA convert PreQ1 to queuine (Q), resulting in the hypermodified nucleoside queuosine (7-(((4,5-cis-dihydroxy-2-cyclopenten-1-yl)amino)methyl)-7-deazaguanosine). The chain is Queuine tRNA-ribosyltransferase from Buchnera aphidicola subsp. Schizaphis graminum (strain Sg).